The sequence spans 721 residues: Polyribonucleotide nucleotidyltransferase (721 aa).

Mg(2+)-binding residues include Asp-495 and Asp-501. In terms of domain architecture, KH spans Pro-562–Ile-621. Residues Gly-631–Lys-699 enclose the S1 motif domain. The disordered stretch occupies residues Lys-699–Lys-721.

This sequence belongs to the polyribonucleotide nucleotidyltransferase family. Requires Mg(2+) as cofactor.

The protein localises to the cytoplasm. The enzyme catalyses RNA(n+1) + phosphate = RNA(n) + a ribonucleoside 5'-diphosphate. In terms of biological role, involved in mRNA degradation. Catalyzes the phosphorolysis of single-stranded polyribonucleotides processively in the 3'- to 5'-direction. The chain is Polyribonucleotide nucleotidyltransferase from Anaeromyxobacter dehalogenans (strain 2CP-C).